The sequence spans 393 residues: Sugar efflux transporter B (393 aa).

The next 12 helical transmembrane spans lie at 13 to 33, 52 to 72, 84 to 101, 105 to 124, 152 to 172, 174 to 194, 219 to 239, 253 to 273, 283 to 303, 308 to 328, 344 to 364, and 366 to 386; these read FDLTSTAFLIVAFLTGIAGAL, MVGFFFTGSAVIGIIVSQFLA, LIVFCCVLGMLACVLFAW, YFILLFIGVFLSSFGSTANP, VSLAWVIGPPLAYALAMGFSF, VMYLSAAVAFIVCGVMVWFFL, LLLFVICTLMWGTNSLYIINM, LAGVMMGTAAGLEIPTMLIAG, LLMCIAVVAGLCFYVGMLLAH, LLGLQLLNAIYIGILGGIGML, LYTNTIRVGWIIAGSLAGIAA, and IWNYHAVFWFALVMIVATMFC.

This sequence belongs to the major facilitator superfamily. Set transporter family.

Its subcellular location is the cell inner membrane. Involved in the efflux of sugars. The physiological role may be the detoxification of non-metabolizable sugar analogs. Can transport lactose and glucose. This Salmonella typhimurium (strain LT2 / SGSC1412 / ATCC 700720) protein is Sugar efflux transporter B (setB).